Consider the following 130-residue polypeptide: Iron-sulfur cluster insertion protein ErpA (130 aa).

Residues Cys-58, Cys-122, and Cys-124 each contribute to the iron-sulfur cluster site.

The protein belongs to the HesB/IscA family. Homodimer. It depends on iron-sulfur cluster as a cofactor.

Its function is as follows. Required for insertion of 4Fe-4S clusters for at least IspG. This chain is Iron-sulfur cluster insertion protein ErpA, found in Stenotrophomonas maltophilia (strain R551-3).